Reading from the N-terminus, the 186-residue chain is FMN reductase (NADPH) (186 aa).

The protein belongs to the SsuE family.

The catalysed reaction is FMNH2 + NADP(+) = FMN + NADPH + 2 H(+). This Pseudomonas aeruginosa (strain ATCC 15692 / DSM 22644 / CIP 104116 / JCM 14847 / LMG 12228 / 1C / PRS 101 / PAO1) protein is FMN reductase (NADPH) (msuE).